We begin with the raw amino-acid sequence, 432 residues long: 3-isopropylmalate dehydratase large subunit (432 aa).

[4Fe-4S] cluster-binding residues include Cys-299, Cys-364, and Cys-367.

Belongs to the aconitase/IPM isomerase family. LeuC type 2 subfamily. In terms of assembly, heterodimer of LeuC and LeuD. It depends on [4Fe-4S] cluster as a cofactor.

It carries out the reaction (2R,3S)-3-isopropylmalate = (2S)-2-isopropylmalate. The protein operates within amino-acid biosynthesis; L-leucine biosynthesis; L-leucine from 3-methyl-2-oxobutanoate: step 2/4. Catalyzes the isomerization between 2-isopropylmalate and 3-isopropylmalate, via the formation of 2-isopropylmaleate. This chain is 3-isopropylmalate dehydratase large subunit, found in Aquifex aeolicus (strain VF5).